The sequence spans 365 residues: Eukaryotic translation initiation factor 3 subunit H (365 aa).

Positions 15–166 constitute an MPN domain; it reads ILLDSLVVMK…IRAWRLSTAA (152 aa). A disordered region spans residues 276-295; sequence KRQQENESRLARGDPPLPMD. Residues 277 to 287 show a composition bias toward basic and acidic residues; the sequence is RQQENESRLAR.

This sequence belongs to the eIF-3 subunit H family. Component of the eukaryotic translation initiation factor 3 (eIF-3) complex.

The protein resides in the cytoplasm. Component of the eukaryotic translation initiation factor 3 (eIF-3) complex, which is involved in protein synthesis of a specialized repertoire of mRNAs and, together with other initiation factors, stimulates binding of mRNA and methionyl-tRNAi to the 40S ribosome. The eIF-3 complex specifically targets and initiates translation of a subset of mRNAs involved in cell proliferation. In Caenorhabditis briggsae, this protein is Eukaryotic translation initiation factor 3 subunit H.